The primary structure comprises 427 residues: Probable transcription factor At5g28040 (427 aa).

The segment at 1-81 is disordered; the sequence is MASDQRDTDF…APATKSSSGT (81 aa). Residue serine 14 is modified to Phosphoserine. The span at 22 to 32 shows a compositional bias: gly residues; that stretch reads GGGGGGRGGGE. The span at 33 to 62 shows a compositional bias: acidic residues; that stretch reads TESDEDVVIPEPNEAEDDDHDPDPDPEYED.

Belongs to the GeBP family.

The sequence is that of Probable transcription factor At5g28040 from Arabidopsis thaliana (Mouse-ear cress).